Consider the following 322-residue polypeptide: Sideroflexin-2 (322 aa).

At M1 the chain carries N-acetylmethionine. Transmembrane regions (helical) follow at residues 100–122, 142–164, 174–192, 228–250, and 265–287; these read MIITGFMLQFYRTMPAVIFWQWV, SVRQMAVSYITATTTAVATAVGM, LVGRWVPFAAVAAANCVNI, VVISRITMAAPGMILLPVLMERL, and PLQVLLSGCFLIFMVPVACGLFP.

The protein belongs to the sideroflexin family.

It is found in the mitochondrion inner membrane. The protein localises to the mitochondrion outer membrane. The catalysed reaction is L-serine(in) = L-serine(out). Mitochondrial amino-acid transporter that mediates transport of serine into mitochondria. Involved in mitochondrial iron homeostasis by regulating heme biosynthesis. The polypeptide is Sideroflexin-2 (Bos taurus (Bovine)).